Consider the following 198-residue polypeptide: Protein GrpE (198 aa).

The segment at 1–32 (MTTEKETATPADVEVASQEEQIDQTTEAQVEE) is disordered.

The protein belongs to the GrpE family. Homodimer.

It is found in the cytoplasm. Its function is as follows. Participates actively in the response to hyperosmotic and heat shock by preventing the aggregation of stress-denatured proteins, in association with DnaK and GrpE. It is the nucleotide exchange factor for DnaK and may function as a thermosensor. Unfolded proteins bind initially to DnaJ; upon interaction with the DnaJ-bound protein, DnaK hydrolyzes its bound ATP, resulting in the formation of a stable complex. GrpE releases ADP from DnaK; ATP binding to DnaK triggers the release of the substrate protein, thus completing the reaction cycle. Several rounds of ATP-dependent interactions between DnaJ, DnaK and GrpE are required for fully efficient folding. The protein is Protein GrpE of Haemophilus ducreyi (strain 35000HP / ATCC 700724).